We begin with the raw amino-acid sequence, 393 residues long: NAD(P)H-quinone oxidoreductase subunit H, chloroplastic (393 aa).

It belongs to the complex I 49 kDa subunit family. As to quaternary structure, NDH is composed of at least 16 different subunits, 5 of which are encoded in the nucleus.

The protein resides in the plastid. Its subcellular location is the chloroplast thylakoid membrane. The catalysed reaction is a plastoquinone + NADH + (n+1) H(+)(in) = a plastoquinol + NAD(+) + n H(+)(out). It catalyses the reaction a plastoquinone + NADPH + (n+1) H(+)(in) = a plastoquinol + NADP(+) + n H(+)(out). Functionally, NDH shuttles electrons from NAD(P)H:plastoquinone, via FMN and iron-sulfur (Fe-S) centers, to quinones in the photosynthetic chain and possibly in a chloroplast respiratory chain. The immediate electron acceptor for the enzyme in this species is believed to be plastoquinone. Couples the redox reaction to proton translocation, and thus conserves the redox energy in a proton gradient. The sequence is that of NAD(P)H-quinone oxidoreductase subunit H, chloroplastic from Solanum bulbocastanum (Wild potato).